The following is a 340-amino-acid chain: GTP 3',8-cyclase (340 aa).

Residues 20 to 246 form the Radical SAM core domain; it reads RFERQYVYLR…PKALSDGPAK (227 aa). A GTP-binding site is contributed by Arg-29. Residues Cys-36 and Cys-40 each coordinate [4Fe-4S] cluster. Tyr-42 serves as a coordination point for S-adenosyl-L-methionine. Residue Cys-43 coordinates [4Fe-4S] cluster. Arg-79 contributes to the GTP binding site. An S-adenosyl-L-methionine-binding site is contributed by Gly-83. Thr-110 contacts GTP. S-adenosyl-L-methionine is bound at residue Ser-134. Lys-171 contributes to the GTP binding site. Met-205 serves as a coordination point for S-adenosyl-L-methionine. The [4Fe-4S] cluster site is built by Cys-268 and Cys-271. 273–275 lines the GTP pocket; the sequence is RLR. A [4Fe-4S] cluster-binding site is contributed by Cys-285.

This sequence belongs to the radical SAM superfamily. MoaA family. As to quaternary structure, monomer and homodimer. [4Fe-4S] cluster is required as a cofactor.

It catalyses the reaction GTP + AH2 + S-adenosyl-L-methionine = (8S)-3',8-cyclo-7,8-dihydroguanosine 5'-triphosphate + 5'-deoxyadenosine + L-methionine + A + H(+). It participates in cofactor biosynthesis; molybdopterin biosynthesis. Its function is as follows. Catalyzes the cyclization of GTP to (8S)-3',8-cyclo-7,8-dihydroguanosine 5'-triphosphate. This is GTP 3',8-cyclase from Actinobacillus pleuropneumoniae serotype 3 (strain JL03).